The chain runs to 490 residues: Protein nucleotidyltransferase YdiU (490 aa).

Residues Gly-94, Gly-96, Arg-97, Lys-117, Asp-129, Gly-130, Arg-180, and Arg-187 each coordinate ATP. Asp-256 acts as the Proton acceptor in catalysis. The Mg(2+) site is built by Asn-257 and Asp-266. Asp-266 serves as a coordination point for ATP.

It belongs to the SELO family. Requires Mg(2+) as cofactor. Mn(2+) serves as cofactor.

The enzyme catalyses L-seryl-[protein] + ATP = 3-O-(5'-adenylyl)-L-seryl-[protein] + diphosphate. It carries out the reaction L-threonyl-[protein] + ATP = 3-O-(5'-adenylyl)-L-threonyl-[protein] + diphosphate. The catalysed reaction is L-tyrosyl-[protein] + ATP = O-(5'-adenylyl)-L-tyrosyl-[protein] + diphosphate. It catalyses the reaction L-histidyl-[protein] + UTP = N(tele)-(5'-uridylyl)-L-histidyl-[protein] + diphosphate. The enzyme catalyses L-seryl-[protein] + UTP = O-(5'-uridylyl)-L-seryl-[protein] + diphosphate. It carries out the reaction L-tyrosyl-[protein] + UTP = O-(5'-uridylyl)-L-tyrosyl-[protein] + diphosphate. Functionally, nucleotidyltransferase involved in the post-translational modification of proteins. It can catalyze the addition of adenosine monophosphate (AMP) or uridine monophosphate (UMP) to a protein, resulting in modifications known as AMPylation and UMPylation. The protein is Protein nucleotidyltransferase YdiU of Clostridium perfringens (strain 13 / Type A).